We begin with the raw amino-acid sequence, 334 residues long: Succinylglutamate desuccinylase (334 aa).

Residues H59, E62, and H151 each coordinate Zn(2+). Residue E215 is part of the active site.

The protein belongs to the AspA/AstE family. Succinylglutamate desuccinylase subfamily. Zn(2+) serves as cofactor.

It catalyses the reaction N-succinyl-L-glutamate + H2O = L-glutamate + succinate. It participates in amino-acid degradation; L-arginine degradation via AST pathway; L-glutamate and succinate from L-arginine: step 5/5. Transforms N(2)-succinylglutamate into succinate and glutamate. The chain is Succinylglutamate desuccinylase from Pseudomonas fluorescens (strain SBW25).